The primary structure comprises 270 residues: 4-hydroxy-tetrahydrodipicolinate reductase (270 aa).

Residues 8 to 13, Asp34, 102 to 104, and 128 to 131 contribute to the NAD(+) site; these read GALGRM, GTT, and SQNY. His160 serves as the catalytic Proton donor/acceptor. His161 contributes to the (S)-2,3,4,5-tetrahydrodipicolinate binding site. Residue Lys164 is the Proton donor of the active site. Residue 170 to 171 coordinates (S)-2,3,4,5-tetrahydrodipicolinate; that stretch reads GT.

Belongs to the DapB family.

The protein localises to the cytoplasm. The catalysed reaction is (S)-2,3,4,5-tetrahydrodipicolinate + NAD(+) + H2O = (2S,4S)-4-hydroxy-2,3,4,5-tetrahydrodipicolinate + NADH + H(+). It carries out the reaction (S)-2,3,4,5-tetrahydrodipicolinate + NADP(+) + H2O = (2S,4S)-4-hydroxy-2,3,4,5-tetrahydrodipicolinate + NADPH + H(+). The protein operates within amino-acid biosynthesis; L-lysine biosynthesis via DAP pathway; (S)-tetrahydrodipicolinate from L-aspartate: step 4/4. Its function is as follows. Catalyzes the conversion of 4-hydroxy-tetrahydrodipicolinate (HTPA) to tetrahydrodipicolinate. The sequence is that of 4-hydroxy-tetrahydrodipicolinate reductase from Methanococcus maripaludis (strain C7 / ATCC BAA-1331).